The following is an 885-amino-acid chain: Lon protease homolog 2, peroxisomal (885 aa).

Positions 12 to 256 constitute a Lon N-terminal domain; it reads LAVLPFRNKV…KATELVDRHL (245 aa). Residues 70 to 104 form a disordered region; it reads LLSPGVGSDSGEGGSKVGGSAVESSKQDTKNGKEP. A compositionally biased stretch (gly residues) spans 77–86; it reads SDSGEGGSKV. Basic and acidic residues predominate over residues 94-104; it reads SKQDTKNGKEP. 409–416 is an ATP binding site; it reads GPPGVGKT. The 186-residue stretch at 690–875 folds into the Lon proteolytic domain; it reads VASPGVSVGL…EEVLDHAFEG (186 aa). Residues Ser781 and Lys824 contribute to the active site. The Microbody targeting signal signature appears at 883–885; that stretch reads SKL.

This sequence belongs to the peptidase S16 family.

The protein resides in the peroxisome matrix. It carries out the reaction Hydrolysis of proteins in presence of ATP.. ATP-dependent serine protease that mediates the selective degradation of misfolded and unassembled polypeptides in the peroxisomal matrix. Necessary for type 2 peroxisome targeting signal (PTS2)-containing protein processing and facilitates peroxisome matrix protein import. The sequence is that of Lon protease homolog 2, peroxisomal (LON1) from Zea mays (Maize).